The sequence spans 63 residues: Odorranain-B1 (63 aa).

Positions 1-22 are cleaved as a signal peptide; it reads MFTTKKPLLLLFFLGIISLSVC. Residues 23–41 constitute a propeptide that is removed on maturation; it reads EQERDADEEDGGEVTEEEV.

Belongs to the frog skin active peptide (FSAP) family. Brevinin subfamily. As to expression, expressed by the skin glands.

It localises to the secreted. This is Odorranain-B1 from Odorrana hainanensis (Odor frog).